A 386-amino-acid polypeptide reads, in one-letter code: DNA-directed RNA polymerase subunit Rpo1C (386 aa).

Belongs to the RNA polymerase beta' chain family. In terms of assembly, part of the RNA polymerase complex.

The protein localises to the cytoplasm. The catalysed reaction is RNA(n) + a ribonucleoside 5'-triphosphate = RNA(n+1) + diphosphate. Functionally, DNA-dependent RNA polymerase (RNAP) catalyzes the transcription of DNA into RNA using the four ribonucleoside triphosphates as substrates. Forms part of the jaw domain. The chain is DNA-directed RNA polymerase subunit Rpo1C from Methanococcus maripaludis (strain C7 / ATCC BAA-1331).